The primary structure comprises 215 residues: Pyrophosphatase PpaX (215 aa).

D9 functions as the Nucleophile in the catalytic mechanism.

This sequence belongs to the HAD-like hydrolase superfamily. PpaX family. Mg(2+) serves as cofactor.

It catalyses the reaction diphosphate + H2O = 2 phosphate + H(+). Hydrolyzes pyrophosphate formed during P-Ser-HPr dephosphorylation by HPrK/P. Might play a role in controlling the intracellular pyrophosphate pool. The chain is Pyrophosphatase PpaX from Anoxybacillus flavithermus (strain DSM 21510 / WK1).